A 680-amino-acid polypeptide reads, in one-letter code: E3 ubiquitin-protein ligase Midline-1 (680 aa).

The segment at 10 to 60 (CPICLELFEDPLLLPCAHSLCFNCAHRILVSHCATNEPVESINAFQCPTCR) adopts an RING-type zinc-finger fold. S92 and S96 each carry phosphoserine. B box-type zinc fingers lie at residues 116–165 (KVLC…IEPI) and 172–212 (GLMC…VAAL). Zn(2+) contacts are provided by C119, C122, C134, C137, C142, C145, H150, H159, C175, H178, C198, and H204. A coiled-coil region spans residues 205 to 264 (RDHQVAALSERYDKLKQNLESNLTNLIKRNTELETLLAKLIQTCQHVEVNASRQEAKLTE). In terms of domain architecture, COS spans 320–379 (LKENDHARFLQTAKNITERVSMATASSQVLIPEINLNDTFDTFALDFSREKKLLECLDYL). The Fibronectin type-III domain maps to 384–494 (PPAIREELCT…RSSEPGKLKT (111 aa)). The segment covering 484-498 (SRSSEPGKLKTNSQP) has biased composition (polar residues). 2 disordered regions span residues 484–503 (SRSS…RLDP) and 516–535 (NLTV…PERF). One can recognise a B30.2/SPRY domain in the interval 495–672 (NSQPFRLDPK…IVTGLPIPDH (178 aa)). Residues 516 to 533 (NLTVERDESSSKKSHAPE) show a composition bias toward basic and acidic residues. A Phosphoserine modification is found at S524.

It belongs to the TRIM/RBCC family. Homodimer or heterodimer with MID2. Interacts with IGBP1. In terms of processing, phosphorylated. In terms of tissue distribution, ubiquitously expressed in fetus and adult. At 9 dpc-10.5 dpc, highest expression found in frontonasal processes, branchial arches and CNS. From 12.5 dpc to 16.5 dpc, high levels found in rostral part of CNS. At 14.5 dpc, begins to be highly expressed in kidney and lung. At 16.5 dpc, highly expressed in the mucosa of the hindgut and cutaneous region of the stomach.

It localises to the cytoplasm. It is found in the cytoskeleton. The enzyme catalyses S-ubiquitinyl-[E2 ubiquitin-conjugating enzyme]-L-cysteine + [acceptor protein]-L-lysine = [E2 ubiquitin-conjugating enzyme]-L-cysteine + N(6)-ubiquitinyl-[acceptor protein]-L-lysine.. Its function is as follows. Has E3 ubiquitin ligase activity towards IGBP1, promoting its monoubiquitination, which results in deprotection of the catalytic subunit of protein phosphatase PP2A, and its subsequent degradation by polyubiquitination. This Mus musculus (Mouse) protein is E3 ubiquitin-protein ligase Midline-1 (Mid1).